The sequence spans 165 residues: MTLSKNSHKEDQLEEKVLVVNRCSKVVKGGRKFSFSALILVGDGKGRLGYGFAKANELTDAIRKGGEAARKNLITIESLESGSIPHEVLVDQDGAQLLLKPAKSGTGIVAGSRIRLILEMAGVKNIVAKSLGSNNPMNQVKAAFKALLSLSSRKDVLQRRRVTHD.

The S5 DRBM domain maps to 13–76 (LEEKVLVVNR…EAARKNLITI (64 aa)).

This sequence belongs to the universal ribosomal protein uS5 family. In terms of assembly, part of the 30S ribosomal subunit. Contacts proteins S4 and S8.

Functionally, with S4 and S12 plays an important role in translational accuracy. Its function is as follows. Located at the back of the 30S subunit body where it stabilizes the conformation of the head with respect to the body. The sequence is that of Small ribosomal subunit protein uS5 from Chlamydia caviae (strain ATCC VR-813 / DSM 19441 / 03DC25 / GPIC) (Chlamydophila caviae).